Consider the following 130-residue polypeptide: Astrocytic phosphoprotein PEA-15 (130 aa).

The region spanning 3–81 is the DED domain; that stretch reads EYGTLLQDLT…RPDLLTMVVD (79 aa). Ser-61, Ser-90, Ser-104, and Ser-116 each carry phosphoserine. The tract at residues 98 to 107 is microtubule-binding; the sequence is KLTRIPSAKK. Positions 122-129 are microtubule-binding; that stretch reads KLAPPPKK.

In terms of assembly, binds RPS6KA3, MAPK3 and MAPK1. Transient interaction with PLD1 and PLD2. Interacts with CASP8 and FADD. Post-translationally, phosphorylated by protein kinase C and calcium-calmodulin-dependent protein kinase. These phosphorylation events are modulated by neurotransmitters or hormones. Ubiquitously expressed. Most abundant in tissues such as heart, brain, muscle and adipose tissue which utilize glucose as an energy source. Lower expression in glucose-producing tissues. Higher levels of expression are found in tissues from individuals with type 2 diabetes than in controls.

The protein localises to the cytoplasm. Its function is as follows. Blocks Ras-mediated inhibition of integrin activation and modulates the ERK MAP kinase cascade. Inhibits RPS6KA3 activities by retaining it in the cytoplasm. Inhibits both TNFRSF6- and TNFRSF1A-mediated CASP8 activity and apoptosis. Regulates glucose transport by controlling both the content of SLC2A1 glucose transporters on the plasma membrane and the insulin-dependent trafficking of SLC2A4 from the cell interior to the surface. This is Astrocytic phosphoprotein PEA-15 (PEA15) from Homo sapiens (Human).